The chain runs to 75 residues: Large ribosomal subunit protein bL31 (75 aa).

Belongs to the bacterial ribosomal protein bL31 family. Type A subfamily. Part of the 50S ribosomal subunit.

Binds the 23S rRNA. The sequence is that of Large ribosomal subunit protein bL31 from Gluconobacter oxydans (strain 621H) (Gluconobacter suboxydans).